Reading from the N-terminus, the 358-residue chain is D-alanine--D-alanine ligase (358 aa).

Residues 136-341 enclose the ATP-grasp domain; that stretch reads KYILQAAGVP…YGDLIEELIQ (206 aa). 169–224 provides a ligand contact to ATP; that stretch reads EGSLLYPMFVKPANMGSSVGISKAENREELQNALALAYQYDSRAIVEQGIEAREIE. 3 residues coordinate Mg(2+): Asp295, Glu308, and Asn310.

This sequence belongs to the D-alanine--D-alanine ligase family. The cofactor is Mg(2+). Mn(2+) serves as cofactor.

The protein localises to the cytoplasm. It catalyses the reaction 2 D-alanine + ATP = D-alanyl-D-alanine + ADP + phosphate + H(+). The protein operates within cell wall biogenesis; peptidoglycan biosynthesis. Its function is as follows. Cell wall formation. In Enterococcus hirae (strain ATCC 9790 / DSM 20160 / JCM 8729 / LMG 6399 / NBRC 3181 / NCIMB 6459 / NCDO 1258 / NCTC 12367 / WDCM 00089 / R), this protein is D-alanine--D-alanine ligase.